A 345-amino-acid chain; its full sequence is Fructose-1,6-bisphosphatase class 1 2 (345 aa).

The Mg(2+) site is built by Glu90, Asp109, Leu111, and Asp112. Substrate-binding positions include 112–115 and Asn200; that span reads DGSS. Glu272 is a binding site for Mg(2+).

Belongs to the FBPase class 1 family. In terms of assembly, homotetramer. It depends on Mg(2+) as a cofactor.

It is found in the cytoplasm. It carries out the reaction beta-D-fructose 1,6-bisphosphate + H2O = beta-D-fructose 6-phosphate + phosphate. It participates in carbohydrate biosynthesis; gluconeogenesis. The protein is Fructose-1,6-bisphosphatase class 1 2 of Nitrobacter hamburgensis (strain DSM 10229 / NCIMB 13809 / X14).